The following is a 319-amino-acid chain: MSQQKIGVLLVNLGTPEHPTAPAIRKFLKPFLADSRVIDYPKFLWKPILYSFILPFRPRKVKPLYQHVWTNEGSPLYANAIGQEKALQAHFDQSEHGVLVRATMAYSKPSISDVVDEFLKEKVAKMIVLPLFPQYSSTTTAAIFDAFAQSLKKKKDIPPFDFIHHYYERPSYIQALAQTIHLQENEHLLFSFHGIPQRYVIEGDYYTEHCQQTAQLIAVAAGLSEEQWQVSYQSRFGPEEWTRPYTDETLIQLPKQGKKKLAVICPGFAADCLETLEEIDITNRKHFMAAGGQAYRYIPALNASPAHIQLLAELISERL.

Fe(2+) contacts are provided by histidine 193 and glutamate 274.

The protein belongs to the ferrochelatase family.

Its subcellular location is the cytoplasm. It catalyses the reaction Fe-coproporphyrin III + 2 H(+) = coproporphyrin III + Fe(2+). Its pathway is porphyrin-containing compound metabolism; protoheme biosynthesis. In terms of biological role, involved in coproporphyrin-dependent heme b biosynthesis. Catalyzes the insertion of ferrous iron into coproporphyrin III to form Fe-coproporphyrin III. This is Coproporphyrin III ferrochelatase from Streptococcus mutans serotype c (strain ATCC 700610 / UA159).